The sequence spans 109 residues: Large ribosomal subunit protein uL24 (109 aa).

This sequence belongs to the universal ribosomal protein uL24 family. As to quaternary structure, part of the 50S ribosomal subunit.

In terms of biological role, one of two assembly initiator proteins, it binds directly to the 5'-end of the 23S rRNA, where it nucleates assembly of the 50S subunit. One of the proteins that surrounds the polypeptide exit tunnel on the outside of the subunit. In Rickettsia africae (strain ESF-5), this protein is Large ribosomal subunit protein uL24.